A 1007-amino-acid polypeptide reads, in one-letter code: A disintegrin and metalloproteinase with thrombospondin motifs 1 (1007 aa).

The signal sequence occupies residues 1–20 (MPCCLWAALSLLLAVVGAGA). Residues Asn130 and Asn228 are each glycosylated (N-linked (GlcNAc...) asparagine). The 187-residue stretch at 184 to 370 (LWLELAIVAD…WSSCSKEQFH (187 aa)) folds into the Peptidase M12B domain. His322 serves as a coordination point for Zn(2+). A Metal-binding motif is present at residues 322 to 333 (HELAHLLGLTHD). Residue Glu323 is part of the active site. Residues His326 and His332 each coordinate Zn(2+). Intrachain disulfides connect Cys338–Cys364, Cys494–Cys530, Cys498–Cys536, and Cys509–Cys520. A TSP type-1 1 domain is found at 482-537 (TPEWGDWEEWSACNADCGYGLRTRTRKCKYRGFVSESACEGAGSQVATCWAGSSCA). 6 N-linked (GlcNAc...) asparagine glycosylation sites follow: Asn561, Asn610, Asn626, Asn737, Asn777, and Asn865. 2 consecutive TSP type-1 domains span residues 833–899 (CEFV…NRIP) and 900–952 (CPVY…RRCP). Intrachain disulfides connect Cys912–Cys946, Cys916–Cys951, and Cys927–Cys935.

Zn(2+) serves as cofactor.

Its subcellular location is the secreted. The protein resides in the extracellular space. It is found in the extracellular matrix. Involved in larval molting and metamorphosis. May degrade extracellular matrix (ECM) and basement membrane (BM) during the development of organs to allow degeneration and remodeling of tissues. This chain is A disintegrin and metalloproteinase with thrombospondin motifs 1, found in Bombyx mori (Silk moth).